Here is a 181-residue protein sequence, read N- to C-terminus: MMQYLVVSLALCATICSAAQTRNMPIQAIAYLIGPVQSDNTQVKGNVTFTQNDCGQNVHVRVQLEGLKEGKHGFHIHEKGDLTNGCISMGAHYNPDKVDHGGPDHEVRHVGDLGNLEANSTGIIDVTYTDQVITLTGKLGIIGRGVVVHELEDDLGLGNHTDSKKTGNAGGRIACGVIGIK.

An N-terminal signal peptide occupies residues 1–18 (MMQYLVVSLALCATICSA). Residue asparagine 46 is glycosylated (N-linked (GlcNAc...) asparagine). Cu cation is bound by residues histidine 75, histidine 77, and histidine 92. An intrachain disulfide couples cysteine 86 to cysteine 175. Residues histidine 92, histidine 100, histidine 109, and aspartate 112 each coordinate Zn(2+). N-linked (GlcNAc...) asparagine glycosylation is present at asparagine 119. A Cu cation-binding site is contributed by histidine 149. Asparagine 159 carries N-linked (GlcNAc...) asparagine glycosylation.

This sequence belongs to the Cu-Zn superoxide dismutase family. The cofactor is Cu cation. Requires Zn(2+) as cofactor. Expressed at higher levels in females compared to males.

Its subcellular location is the secreted. The enzyme catalyses 2 superoxide + 2 H(+) = H2O2 + O2. Functionally, protects the extracellular space from the toxic effects of reactive oxygen intermediates by converting superoxide radicals into hydrogen peroxide and oxygen. This Drosophila melanogaster (Fruit fly) protein is Extracellular superoxide dismutase [Cu-Zn].